The sequence spans 347 residues: CRISPR-associated endonuclease Cas1 4 (347 aa).

The span at 1 to 21 (MNIENEVHIENASESKREPKP) shows a compositional bias: basic and acidic residues. The interval 1–25 (MNIENEVHIENASESKREPKPPEGL) is disordered. Glutamate 176, histidine 241, and glutamate 256 together coordinate Mn(2+).

This sequence belongs to the CRISPR-associated endonuclease Cas1 family. Homodimer, forms a heterotetramer with a Cas2 homodimer. Mg(2+) is required as a cofactor. The cofactor is Mn(2+).

Its function is as follows. CRISPR (clustered regularly interspaced short palindromic repeat), is an adaptive immune system that provides protection against mobile genetic elements (viruses, transposable elements and conjugative plasmids). CRISPR clusters contain spacers, sequences complementary to antecedent mobile elements, and target invading nucleic acids. CRISPR clusters are transcribed and processed into CRISPR RNA (crRNA). Acts as a dsDNA endonuclease. Involved in the integration of spacer DNA into the CRISPR cassette. The protein is CRISPR-associated endonuclease Cas1 4 of Methanospirillum hungatei JF-1 (strain ATCC 27890 / DSM 864 / NBRC 100397 / JF-1).